The primary structure comprises 73 residues: Hypotensin-like peptide (73 aa).

The first 25 residues, 1–25 (MKMMIAIVFVSILLLMFSLSSTAMG), serve as a signal peptide directing secretion.

Expressed by the venom gland.

The protein localises to the secreted. Its function is as follows. May potentiate the hypotensive effect of bradykinin. In Tityus serrulatus (Brazilian scorpion), this protein is Hypotensin-like peptide.